The primary structure comprises 541 residues: Chaperonin GroEL 2 (541 aa).

ATP-binding positions include 29 to 32 (TLGP), 86 to 90 (DGTTT), Gly-414, 478 to 480 (DAA), and Asp-494.

The protein belongs to the chaperonin (HSP60) family. Forms a cylinder of 14 subunits composed of two heptameric rings stacked back-to-back. Interacts with the co-chaperonin GroES.

The protein localises to the cytoplasm. The catalysed reaction is ATP + H2O + a folded polypeptide = ADP + phosphate + an unfolded polypeptide.. Its function is as follows. Together with its co-chaperonin GroES, plays an essential role in assisting protein folding. The GroEL-GroES system forms a nano-cage that allows encapsulation of the non-native substrate proteins and provides a physical environment optimized to promote and accelerate protein folding. In Frankia casuarinae (strain DSM 45818 / CECT 9043 / HFP020203 / CcI3), this protein is Chaperonin GroEL 2.